A 327-amino-acid polypeptide reads, in one-letter code: Putative HTH-type transcriptional regulatory protein MM_0444 (327 aa).

One can recognise an HTH cro/C1-type domain in the interval 132 to 190; sequence LKKARTTQSMSLGTLASMVGVSRRTISKYEEEGMDASIDVVLHLEDIFGVELAKPIDIL. A DNA-binding region (H-T-H motif) is located at residues 143–162; it reads LGTLASMVGVSRRTISKYEE. Residues 195–214 form a disordered region; the sequence is SRKPRKKAEPEKEEPKGKPG. The segment covering 201–211 has biased composition (basic and acidic residues); the sequence is KAEPEKEEPKG.

The protein is Putative HTH-type transcriptional regulatory protein MM_0444 of Methanosarcina mazei (strain ATCC BAA-159 / DSM 3647 / Goe1 / Go1 / JCM 11833 / OCM 88) (Methanosarcina frisia).